The following is a 65-amino-acid chain: Large ribosomal subunit protein bL35 (65 aa).

Belongs to the bacterial ribosomal protein bL35 family.

In Wolbachia sp. subsp. Brugia malayi (strain TRS), this protein is Large ribosomal subunit protein bL35.